Reading from the N-terminus, the 536-residue chain is Chaperonin GroEL (536 aa).

ATP is bound by residues 29 to 32, 86 to 90, Gly412, and Asp493; these read TLGP and DGTTT.

The protein belongs to the chaperonin (HSP60) family. As to quaternary structure, forms a cylinder of 14 subunits composed of two heptameric rings stacked back-to-back. Interacts with the co-chaperonin GroES.

Its subcellular location is the cytoplasm. The catalysed reaction is ATP + H2O + a folded polypeptide = ADP + phosphate + an unfolded polypeptide.. Together with its co-chaperonin GroES, plays an essential role in assisting protein folding. The GroEL-GroES system forms a nano-cage that allows encapsulation of the non-native substrate proteins and provides a physical environment optimized to promote and accelerate protein folding. The chain is Chaperonin GroEL from Aster yellows witches'-broom phytoplasma (strain AYWB).